The chain runs to 101 residues: ATP-dependent Clp protease adapter protein ClpS (101 aa).

The protein belongs to the ClpS family. In terms of assembly, binds to the N-terminal domain of the chaperone ClpA.

In terms of biological role, involved in the modulation of the specificity of the ClpAP-mediated ATP-dependent protein degradation. This Corynebacterium efficiens (strain DSM 44549 / YS-314 / AJ 12310 / JCM 11189 / NBRC 100395) protein is ATP-dependent Clp protease adapter protein ClpS.